Reading from the N-terminus, the 254-residue chain is 5'-nucleotidase SurE (254 aa).

A divalent metal cation is bound by residues aspartate 8, aspartate 9, serine 40, and asparagine 93.

The protein belongs to the SurE nucleotidase family. The cofactor is a divalent metal cation.

Its subcellular location is the cytoplasm. The catalysed reaction is a ribonucleoside 5'-phosphate + H2O = a ribonucleoside + phosphate. In terms of biological role, nucleotidase that shows phosphatase activity on nucleoside 5'-monophosphates. The chain is 5'-nucleotidase SurE from Methylorubrum populi (strain ATCC BAA-705 / NCIMB 13946 / BJ001) (Methylobacterium populi).